Here is a 496-residue protein sequence, read N- to C-terminus: Probable cytosol aminopeptidase (496 aa).

Positions 252 and 257 each coordinate Mn(2+). The active site involves lysine 264. Mn(2+)-binding residues include aspartate 275, aspartate 334, and glutamate 336. Arginine 338 is a catalytic residue.

The protein belongs to the peptidase M17 family. It depends on Mn(2+) as a cofactor.

The protein resides in the cytoplasm. It carries out the reaction Release of an N-terminal amino acid, Xaa-|-Yaa-, in which Xaa is preferably Leu, but may be other amino acids including Pro although not Arg or Lys, and Yaa may be Pro. Amino acid amides and methyl esters are also readily hydrolyzed, but rates on arylamides are exceedingly low.. The enzyme catalyses Release of an N-terminal amino acid, preferentially leucine, but not glutamic or aspartic acids.. Functionally, presumably involved in the processing and regular turnover of intracellular proteins. Catalyzes the removal of unsubstituted N-terminal amino acids from various peptides. The polypeptide is Probable cytosol aminopeptidase (Leifsonia xyli subsp. xyli (strain CTCB07)).